A 139-amino-acid polypeptide reads, in one-letter code: Small ribosomal subunit protein uS12 (139 aa).

Positions 1–44 (MPTINQLVKKPRTSKVKKSTAPALNKGYNSHKKKATDLASPQKR) are disordered. The segment covering 9-18 (KKPRTSKVKK) has biased composition (basic residues). At Asp102 the chain carries 3-methylthioaspartic acid.

The protein belongs to the universal ribosomal protein uS12 family. In terms of assembly, part of the 30S ribosomal subunit. Contacts proteins S8 and S17. May interact with IF1 in the 30S initiation complex.

Its function is as follows. With S4 and S5 plays an important role in translational accuracy. Interacts with and stabilizes bases of the 16S rRNA that are involved in tRNA selection in the A site and with the mRNA backbone. Located at the interface of the 30S and 50S subunits, it traverses the body of the 30S subunit contacting proteins on the other side and probably holding the rRNA structure together. The combined cluster of proteins S8, S12 and S17 appears to hold together the shoulder and platform of the 30S subunit. The chain is Small ribosomal subunit protein uS12 from Macrococcus caseolyticus (strain JCSC5402) (Macrococcoides caseolyticum).